Consider the following 351-residue polypeptide: Putative NBPF family member NBPF5 (351 aa).

2 coiled-coil regions span residues 10–43 (SERA…EKFL) and 69–115 (DSVL…KLRE). The tract at residues 157–285 (HLVHKLSPEN…VPPRHHDKSN (129 aa)) is disordered. Acidic residues predominate over residues 165–179 (ENDEDEDEDEDDKDE). The region spanning 174–261 (EDDKDEEVEK…EEEEALNIPP (88 aa)) is the Olduvai domain. Over residues 192 to 202 (EVQKTEEKEVP) the composition is skewed to basic and acidic residues. Over residues 214-226 (SNSHNPSNSNQPH) the composition is skewed to low complexity. 2 stretches are compositionally biased toward basic and acidic residues: residues 232–251 (TFKE…HPHD) and 264–273 (QNDHEEEEGK).

This sequence belongs to the NBPF family. As to expression, expressed in brain and medulla.

The protein resides in the cytoplasm. This is Putative NBPF family member NBPF5 from Homo sapiens (Human).